Reading from the N-terminus, the 440-residue chain is GTPase Der (440 aa).

2 consecutive EngA-type G domains span residues 3 to 168 (PIIA…GKMD) and 177 to 353 (LKLA…EEYT). Residues 9–16 (GRPNVGKS), 56–60 (DTGGL), 119–122 (NKID), 183–190 (GKPNAGKS), 230–234 (DTAGI), and 295–298 (NKWD) each bind GTP. One can recognise a KH-like domain in the interval 354–438 (KRISTGLLNT…PIMISFENKS (85 aa)).

It belongs to the TRAFAC class TrmE-Era-EngA-EngB-Septin-like GTPase superfamily. EngA (Der) GTPase family. Associates with the 50S ribosomal subunit.

Functionally, GTPase that plays an essential role in the late steps of ribosome biogenesis. The chain is GTPase Der from Fusobacterium nucleatum subsp. nucleatum (strain ATCC 25586 / DSM 15643 / BCRC 10681 / CIP 101130 / JCM 8532 / KCTC 2640 / LMG 13131 / VPI 4355).